Reading from the N-terminus, the 61-residue chain is Small ribosomal subunit protein uS14 (61 aa).

Cysteine 24, cysteine 27, cysteine 40, and cysteine 43 together coordinate Zn(2+).

This sequence belongs to the universal ribosomal protein uS14 family. Zinc-binding uS14 subfamily. In terms of assembly, part of the 30S ribosomal subunit. Contacts proteins S3 and S10. Requires Zn(2+) as cofactor.

Functionally, binds 16S rRNA, required for the assembly of 30S particles and may also be responsible for determining the conformation of the 16S rRNA at the A site. The sequence is that of Small ribosomal subunit protein uS14 from Mycoplasmoides gallisepticum (strain R(low / passage 15 / clone 2)) (Mycoplasma gallisepticum).